Reading from the N-terminus, the 159-residue chain is SsrA-binding protein (159 aa).

This sequence belongs to the SmpB family.

The protein resides in the cytoplasm. Its function is as follows. Required for rescue of stalled ribosomes mediated by trans-translation. Binds to transfer-messenger RNA (tmRNA), required for stable association of tmRNA with ribosomes. tmRNA and SmpB together mimic tRNA shape, replacing the anticodon stem-loop with SmpB. tmRNA is encoded by the ssrA gene; the 2 termini fold to resemble tRNA(Ala) and it encodes a 'tag peptide', a short internal open reading frame. During trans-translation Ala-aminoacylated tmRNA acts like a tRNA, entering the A-site of stalled ribosomes, displacing the stalled mRNA. The ribosome then switches to translate the ORF on the tmRNA; the nascent peptide is terminated with the 'tag peptide' encoded by the tmRNA and targeted for degradation. The ribosome is freed to recommence translation, which seems to be the essential function of trans-translation. This chain is SsrA-binding protein, found in Bifidobacterium adolescentis (strain ATCC 15703 / DSM 20083 / NCTC 11814 / E194a).